Consider the following 424-residue polypeptide: O-seryl-dTMP PLP-dependent decarboxylase (424 aa).

Belongs to the pyridoxal-phosphate-dependent aminodecarboxylase family.

It carries out the reaction 5-O-(L-seryl)-dTMP in DNA + H(+) = 5-aminoethoxy-methyl-dUMP in DNA + CO2. Converts 5-O-serinylthymidine (O-SerT) into 5-aminoethoxy-2'-deoxymethyluridine (5-NeOmdU) as a step in the pathway leading to thymidine hypermodifications in the viral genome. As a final result of the pathway of hypermodification, 5-NeOmdU substitutes for about 40% of the thymidines in the viral DNA. These modifications probably prevent degradation of viral genome by the host restriction-modification antiviral defense system. This is O-seryl-dTMP PLP-dependent decarboxylase from Salmonella phage ViI.